Consider the following 172-residue polypeptide: MDLQSHIRSIPDFPKPGILFRDINPLLRSPEAMAEVISQFGRICDQVKPDLIVGIESRGFIFGAPLASDRRLGFVPVRKPGKLPGEVVGLDYALEYGTDRLEIQADALEHSPRVLVVDDLLATGGTAAATGQLVEQAGGCLVGFAFVIELEGFGGRRALPAGQPVEALLRYG.

Belongs to the purine/pyrimidine phosphoribosyltransferase family. Homodimer.

Its subcellular location is the cytoplasm. The enzyme catalyses AMP + diphosphate = 5-phospho-alpha-D-ribose 1-diphosphate + adenine. Its pathway is purine metabolism; AMP biosynthesis via salvage pathway; AMP from adenine: step 1/1. Catalyzes a salvage reaction resulting in the formation of AMP, that is energically less costly than de novo synthesis. The polypeptide is Adenine phosphoribosyltransferase (Synechococcus sp. (strain CC9605)).